We begin with the raw amino-acid sequence, 1021 residues long: 2-oxoglutarate dehydrogenase complex component E1 (1021 aa).

Residues 1-40 (MFNLRTCASKLRPLTASQTIRSLKHNRPAAPRTFQQFRCL) constitute a mitochondrion transit peptide. Ca(2+) is bound by residues histidine 142, aspartate 155, and aspartate 157. Residues arginine 311, aspartate 410, asparagine 443, and isoleucine 445 each coordinate thiamine diphosphate. Mg(2+)-binding residues include aspartate 410, asparagine 443, and isoleucine 445. A Glycyl lysine isopeptide (Lys-Gly) (interchain with G-Cter in ubiquitin) cross-link involves residue lysine 533. Glutamine 675 provides a ligand contact to thiamine diphosphate.

The protein belongs to the alpha-ketoglutarate dehydrogenase family. As to quaternary structure, homodimer. The 2-oxoglutarate dehydrogenase complex is composed of OGDH (2-oxoglutarate dehydrogenase; E1), DLST (dihydrolipoamide succinyltransferase; E2) and DLD (dihydrolipoamide dehydrogenase; E3). It contains multiple copies of the three enzymatic components (E1, E2 and E3). In the nucleus, the 2-oxoglutarate dehydrogenase complex associates with kat2a. Thiamine diphosphate is required as a cofactor. The cofactor is Mg(2+). As to expression, expressed in the brain.

Its subcellular location is the mitochondrion. It localises to the nucleus. It catalyses the reaction N(6)-[(R)-lipoyl]-L-lysyl-[protein] + 2-oxoglutarate + H(+) = N(6)-[(R)-S(8)-succinyldihydrolipoyl]-L-lysyl-[protein] + CO2. Calcium ions and ADP stimulate, whereas ATP and NADH reduce catalytic activity. 2-oxoglutarate dehydrogenase (E1o) component of the 2-oxoglutarate dehydrogenase complex (OGDHC). Participates in the first step, rate limiting for the overall conversion of 2-oxoglutarate to succinyl-CoA and CO(2) catalyzed by the whole OGDHC. Catalyzes the irreversible decarboxylation of 2-oxoglutarate (alpha-ketoglutarate) via the thiamine diphosphate (ThDP) cofactor and subsequent transfer of the decarboxylated acyl intermediate on an oxidized dihydrolipoyl group that is covalently amidated to the E2 enzyme (dihydrolipoyllysine-residue succinyltransferase or DLST). Plays a key role in the Krebs (citric acid) cycle, which is a common pathway for oxidation of fuel molecules, including carbohydrates, fatty acids, and amino acids. Can catalyze the decarboxylation of 2-oxoadipate in vitro, but at a much lower rate than 2-oxoglutarate. Mainly active in the mitochondrion. A fraction of the 2-oxoglutarate dehydrogenase complex also localizes in the nucleus and is required for lysine succinylation of histones: associates with KAT2A on chromatin and provides succinyl-CoA to histone succinyltransferase KAT2A. The protein is 2-oxoglutarate dehydrogenase complex component E1 (ogdh) of Xenopus laevis (African clawed frog).